A 363-amino-acid polypeptide reads, in one-letter code: Pyrimidine monooxygenase RutA (363 aa).

Residues 49-50, asparagine 115, glutamate 124, 140-141, and serine 190 each bind FMN; these read IK and RY.

This sequence belongs to the NtaA/SnaA/DszA monooxygenase family. RutA subfamily.

It catalyses the reaction uracil + FMNH2 + NADH + O2 = (Z)-3-ureidoacrylate + FMN + NAD(+) + H2O + H(+). It carries out the reaction thymine + FMNH2 + NADH + O2 = (Z)-2-methylureidoacrylate + FMN + NAD(+) + H2O + H(+). In terms of biological role, catalyzes the pyrimidine ring opening between N-3 and C-4 by an unusual flavin hydroperoxide-catalyzed mechanism, adding oxygen atoms in the process to yield ureidoacrylate peracid, that immediately reacts with FMN forming ureidoacrylate and FMN-N(5)-oxide. The FMN-N(5)-oxide reacts spontaneously with NADH to produce FMN. Requires the flavin reductase RutF to regenerate FMN in vivo. The sequence is that of Pyrimidine monooxygenase RutA from Klebsiella pneumoniae subsp. pneumoniae (strain ATCC 700721 / MGH 78578).